Consider the following 776-residue polypeptide: Microtubule-associated protein tau (776 aa).

The span at 1–26 shows a compositional bias: basic and acidic residues; that stretch reads MAEPRQEFDVMEDHAGTYGLGDRKDQ. The interval 1–591 is disordered; that stretch reads MAEPRQEFDV…PVPMPDLKNV (591 aa). An N-acetylalanine modification is found at A2. 2 positions are modified to phosphotyrosine: Y18 and Y29. A Glycyl lysine isopeptide (Lys-Gly) (interchain with G-Cter in ubiquitin) cross-link involves residue K44. Phosphoserine occurs at positions 46 and 61. Positions 61 to 71 are enriched in polar residues; it reads SETSDAKSTPT. Residues T69, T71, and T111 each carry the phosphothreonine modification. 2 stretches are compositionally biased toward basic and acidic residues: residues 179 to 189 and 207 to 216; these read EGGRHAPELLK and GGKERPGIKE. Residues 217 to 228 show a composition bias toward acidic residues; that stretch reads EVDEDRDVDESS. Residues 314–323 show a composition bias toward basic and acidic residues; sequence EQAHSEEHLG. Residues 325 to 340 are compositionally biased toward low complexity; the sequence is AAFPGAPGEGPEAQGP. Composition is skewed to basic and acidic residues over residues 344 to 356 and 381 to 393; these read EDTKEADLPEPSE and KSKDGTGSDDKKA. Over residues 442–453 the composition is skewed to low complexity; sequence VSSVTXRTGSSG. Basic and acidic residues predominate over residues 455–466; it reads KEMKLKGADGKT. T470 carries the post-translational modification Phosphothreonine. Residue R472 is modified to Omega-N-methylarginine. K480 is modified (N6,N6-dimethyllysine; alternate). Residue K480 is modified to N6-acetyllysine; alternate. A phosphothreonine mark is found at T486, T492, and T498. Phosphoserine occurs at positions 502, 526, and 530. Positions 517 to 528 are enriched in basic and acidic residues; that stretch reads KSERGEPPKSGD. The segment covering 529-549 has biased composition (low complexity); it reads RSGYSSPGSPGTPGSRSRTPS. Phosphotyrosine is present on Y532. Phosphoserine occurs at positions 533, 534, and 537. T540 and T547 each carry phosphothreonine. Phosphoserine is present on S549. T552 carries the phosphothreonine modification. Position 560 is an N6-acetyllysine (K560). Position 566 is a phosphothreonine (T566). 2 positions are modified to phosphoserine: S570 and S572. Tau/MAP repeat units follow at residues 579 to 609, 610 to 640, 641 to 671, and 672 to 703; these read QTAPVPMPDLKNVKSKIGSTENLKHQPGGGK, VQIINKKLDLSNVQSKCGSKDNIKHVPGGGS, VQIVYKPVDLSKVTSKCGSLGNIHHKPGGGQ, and VEVKSEKLDFKDRVQSKIGSLDNITHVPGGGN. K589 participates in a covalent cross-link: Glycyl lysine isopeptide (Lys-Gly) (interchain with G-Cter in ubiquitin). K594 carries the post-translational modification N6-acetyllysine; alternate. N6-methyllysine; alternate is present on K594. K594 is covalently cross-linked (Glycyl lysine isopeptide (Lys-Gly) (interchain with G-Cter in ubiquitin); alternate). S597 carries the post-translational modification Phosphoserine. A Glycyl lysine isopeptide (Lys-Gly) (interchain with G-Cter in ubiquitin) cross-link involves residue K602. An N6-acetyllysine; alternate modification is found at K616. Residue K616 forms a Glycyl lysine isopeptide (Lys-Gly) (interchain with G-Cter in ubiquitin); alternate linkage. Residues S620 and S624 each carry the phosphoserine modification. N6-acetyllysine is present on K625. Position 628 is a phosphoserine (S628). N6-acetyllysine; alternate is present on K633. K633 is covalently cross-linked (Glycyl lysine isopeptide (Lys-Gly) (interchain with G-Cter in ubiquitin); alternate). At S640 the chain carries Phosphoserine. Residue K646 is modified to N6,N6-dimethyllysine; alternate. N6-acetyllysine; alternate is present on residues K646, K652, and K656. Glycyl lysine isopeptide (Lys-Gly) (interchain with G-Cter in ubiquitin); alternate cross-links involve residues K646, K652, and K656. The residue at position 659 (S659) is a Phosphoserine. N6-acetyllysine; alternate is present on residues K666, K678, and K682. Residues K666, K678, and K682 each participate in a glycyl lysine isopeptide (Lys-Gly) (interchain with G-Cter in ubiquitin); alternate cross-link. R684 is subject to Omega-N-methylarginine. A Phosphoserine modification is found at S687. Residue K688 forms a Glycyl lysine isopeptide (Lys-Gly) (interchain with G-Cter in ubiquitin) linkage. Residue S691 is modified to Phosphoserine. At K704 the chain carries N6-acetyllysine; alternate. K704 participates in a covalent cross-link: Glycyl lysine isopeptide (Lys-Gly) (interchain with G-Cter in ubiquitin); alternate. Residue K710 forms a Glycyl lysine isopeptide (Lys-Gly) (interchain with G-Cter in ubiquitin) linkage. Position 720 is an N6-acetyllysine; alternate (K720). Residue K720 forms a Glycyl lysine isopeptide (Lys-Gly) (interchain with G-Cter in ubiquitin); alternate linkage. Position 729 is a phosphotyrosine (Y729). 2 positions are modified to phosphoserine: S731 and S735. The tract at residues 733-752 is disordered; it reads VVSGDTSPRHLSNVSSTGSI. Positions 736–751 are enriched in polar residues; the sequence is GDTSPRHLSNVSSTGS. At T738 the chain carries Phosphothreonine. 4 positions are modified to phosphoserine: S739, S744, S751, and S757. T762 bears the Phosphothreonine mark.

As to quaternary structure, interacts with MARK1, MARK2, MARK3 and MARK4. Interacts with SQSTM1 when polyubiquitinated. Interacts with PSMC2 through SQSTM1. Interacts with FKBP4. Binds to CSNK1D. Interacts with SGK1. Interacts with EPM2A; the interaction dephosphorylates MAPT at Ser-396. Interacts with PIN1. Interacts with LRRK2. Interacts with LRP1, leading to endocytosis; this interaction is reduced in the presence of LRPAP1/RAP. In terms of processing, polyubiquitinated. Requires functional TRAF6 and may provoke SQSTM1-dependent degradation by the proteasome. Post-translationally, phosphorylation at various serine and threonine residues in S-P or T-P motifs by proline-directed protein kinases (PDPK1, CDK1, CDK5, GSK3, MAPK) (a few sites per protein in interphase, more in mitosis), and at serine residues in K-X-G-S motifs by MAP/microtubule affinity-regulating kinase (MARK1, MARK2, MARK3 or MARK4), causing detachment from microtubules, and their disassembly. Phosphorylation at Ser-597 by BRSK1 and BRSK2 in neurons affects ability to bind microtubules and plays a role in neuron polarization. Phosphorylated by PHK. Dephosphorylation at several serine and threonine residues by the serine/threonine phosphatase PPP5C.

The protein localises to the cytoplasm. Its subcellular location is the cytosol. The protein resides in the cell membrane. It localises to the cytoskeleton. It is found in the cell projection. The protein localises to the axon. Its subcellular location is the dendrite. Functionally, promotes microtubule assembly and stability, and might be involved in the establishment and maintenance of neuronal polarity. The C-terminus binds axonal microtubules while the N-terminus binds neural plasma membrane components, suggesting that tau functions as a linker protein between both. Axonal polarity is predetermined by tau localization (in the neuronal cell) in the domain of the cell body defined by the centrosome. The short isoforms allow plasticity of the cytoskeleton whereas the longer isoforms may preferentially play a role in its stabilization. The sequence is that of Microtubule-associated protein tau (MAPT) from Hylobates lar (Lar gibbon).